The following is a 268-amino-acid chain: 3-methyl-2-oxobutanoate hydroxymethyltransferase (268 aa).

Mg(2+) is bound by residues Asp46 and Asp85. 3-methyl-2-oxobutanoate contacts are provided by residues 46-47, Asp85, and Lys114; that span reads DS. Glu116 provides a ligand contact to Mg(2+). The active-site Proton acceptor is the Glu183.

This sequence belongs to the PanB family. Homodecamer; pentamer of dimers. Mg(2+) serves as cofactor.

It is found in the cytoplasm. The catalysed reaction is 3-methyl-2-oxobutanoate + (6R)-5,10-methylene-5,6,7,8-tetrahydrofolate + H2O = 2-dehydropantoate + (6S)-5,6,7,8-tetrahydrofolate. Its pathway is cofactor biosynthesis; coenzyme A biosynthesis. Its function is as follows. Catalyzes the reversible reaction in which hydroxymethyl group from 5,10-methylenetetrahydrofolate is transferred onto alpha-ketoisovalerate to form ketopantoate. This is 3-methyl-2-oxobutanoate hydroxymethyltransferase from Sulfolobus acidocaldarius (strain ATCC 33909 / DSM 639 / JCM 8929 / NBRC 15157 / NCIMB 11770).